Consider the following 206-residue polypeptide: Large ribosomal subunit protein eL13 (206 aa).

The segment covering 184–193 (EKTNQKWDGK) has biased composition (basic and acidic residues). The disordered stretch occupies residues 184–206 (EKTNQKWDGKRKAKAQAAAEPKA).

Belongs to the eukaryotic ribosomal protein eL13 family.

The polypeptide is Large ribosomal subunit protein eL13 (RPL13) (Tetrahymena thermophila (strain SB210)).